The primary structure comprises 333 residues: Nucleoid-associated protein VC0395_A1624/VC395_2154 (333 aa).

The protein belongs to the YejK family.

It is found in the cytoplasm. It localises to the nucleoid. The protein is Nucleoid-associated protein VC0395_A1624/VC395_2154 of Vibrio cholerae serotype O1 (strain ATCC 39541 / Classical Ogawa 395 / O395).